Consider the following 1061-residue polypeptide: Error-prone DNA polymerase (1061 aa).

Belongs to the DNA polymerase type-C family. DnaE2 subfamily.

Its subcellular location is the cytoplasm. The enzyme catalyses DNA(n) + a 2'-deoxyribonucleoside 5'-triphosphate = DNA(n+1) + diphosphate. DNA polymerase involved in damage-induced mutagenesis and translesion synthesis (TLS). It is not the major replicative DNA polymerase. The sequence is that of Error-prone DNA polymerase from Bdellovibrio bacteriovorus (strain ATCC 15356 / DSM 50701 / NCIMB 9529 / HD100).